Consider the following 242-residue polypeptide: uncharacterized protein (242 aa).

S-adenosyl-L-methionine-binding residues include Gly-198, Ile-218, and Leu-227.

It belongs to the class IV-like SAM-binding methyltransferase superfamily. RNA methyltransferase TrmH family.

This is an uncharacterized protein from Mycoplasma pneumoniae (strain ATCC 29342 / M129 / Subtype 1) (Mycoplasmoides pneumoniae).